Consider the following 148-residue polypeptide: UPF0756 membrane protein ETA_17460 (148 aa).

The next 4 membrane-spanning stretches (helical) occupy residues 14–34 (ALSY…LIVI), 51–71 (MTVG…SGTI), 80–100 (FLHW…WLGG), and 112–132 (VVGG…GVPV).

The protein belongs to the UPF0756 family.

It is found in the cell membrane. The sequence is that of UPF0756 membrane protein ETA_17460 from Erwinia tasmaniensis (strain DSM 17950 / CFBP 7177 / CIP 109463 / NCPPB 4357 / Et1/99).